A 511-amino-acid chain; its full sequence is Glucose-1-phosphate adenylyltransferase large subunit 1, chloroplastic/amyloplastic (511 aa).

The transit peptide at 1–58 directs the protein to the chloroplast; that stretch reads MAAMDLRVAAPASVAAAARCGTSLARPWPARAVGGGGGGGGRGRRLSVRTSVATTEAA.

This sequence belongs to the bacterial/plant glucose-1-phosphate adenylyltransferase family. As to quaternary structure, heterotetramer composed of two small and two large subunits. As to expression, expressed in leaves and stems.

The protein resides in the plastid. The protein localises to the chloroplast. Its subcellular location is the amyloplast. The catalysed reaction is alpha-D-glucose 1-phosphate + ATP + H(+) = ADP-alpha-D-glucose + diphosphate. The protein operates within glycan biosynthesis; starch biosynthesis. Its activity is regulated as follows. Activated by 3'phosphoglycerate, inhibited by orthophosphate. Allosteric regulation. Its function is as follows. Involved in synthesis of starch. Catalyzes the synthesis of ADP-glucose, a molecule that serves as an activated glycosyl donor for alpha-1,4-glucan synthesis. Essential for starch synthesis in leaf chloroplasts and endosperm amyloplasts. The polypeptide is Glucose-1-phosphate adenylyltransferase large subunit 1, chloroplastic/amyloplastic (Oryza sativa subsp. japonica (Rice)).